A 557-amino-acid polypeptide reads, in one-letter code: MYDKSRSNKVYGGYEKAPNRAFLKAMGLTDDDISKPLVGVAVAWNEAGPCNIHLLGLSQVVKEGIRELGGTPRTFTAPVLIDGIAMGSESMKYSLVSREVIANTVELTVNGHGYDGFVALGGCDKTQPGLMMSMARLNIPSVYMYGGTTLPGNFRGRDIAIGDVYEAVGAFSAGKITAEDLRIMEDNAIPGPGACGGLYTANTMAMLSEALGLSLPGSSAPPAVSSDRTKFAKETGRTLMKVMEIGLKPRDILTFEAFENGIALLMASGGSTNGVLHLLAIAHEAGVSLTLDDFDRISKKVPEIVNMKPGGDYVMADLYRVGGTPVILKKLLDRGLLHGDTITVTGKTMAQNLSEYKIPEFKHDHIVRDLSNPFLPSGGIRILKGSLAPEGSVVKLSASKIKYHRGPARVFNSEEEAFETVLKKKINEGDVVVIRYEGPKGGPGMREMLAVTSAIVGQGLGEKVALVTDGRFSGATRGLMVGHVAPEAAVGGPIALIRDGDTIVIDGEKGRLDVELSDQELKSRAKDWTPPEPRYKTGLLAQYAKLVTSSARGAVLV.

Cys50 contributes to the [2Fe-2S] cluster binding site. Position 82 (Asp82) interacts with Mg(2+). Position 123 (Cys123) interacts with [2Fe-2S] cluster. Residues Asp124 and Lys125 each coordinate Mg(2+). The residue at position 125 (Lys125) is an N6-carboxylysine. Cys195 contacts [2Fe-2S] cluster. Glu447 lines the Mg(2+) pocket. Ser473 functions as the Proton acceptor in the catalytic mechanism.

The protein belongs to the IlvD/Edd family. Homodimer. Requires [2Fe-2S] cluster as cofactor. The cofactor is Mg(2+).

It carries out the reaction (2R)-2,3-dihydroxy-3-methylbutanoate = 3-methyl-2-oxobutanoate + H2O. It catalyses the reaction (2R,3R)-2,3-dihydroxy-3-methylpentanoate = (S)-3-methyl-2-oxopentanoate + H2O. The protein operates within amino-acid biosynthesis; L-isoleucine biosynthesis; L-isoleucine from 2-oxobutanoate: step 3/4. Its pathway is amino-acid biosynthesis; L-valine biosynthesis; L-valine from pyruvate: step 3/4. Its function is as follows. Functions in the biosynthesis of branched-chain amino acids. Catalyzes the dehydration of (2R,3R)-2,3-dihydroxy-3-methylpentanoate (2,3-dihydroxy-3-methylvalerate) into 2-oxo-3-methylpentanoate (2-oxo-3-methylvalerate) and of (2R)-2,3-dihydroxy-3-methylbutanoate (2,3-dihydroxyisovalerate) into 2-oxo-3-methylbutanoate (2-oxoisovalerate), the penultimate precursor to L-isoleucine and L-valine, respectively. The polypeptide is Dihydroxy-acid dehydratase (Metallosphaera sedula (strain ATCC 51363 / DSM 5348 / JCM 9185 / NBRC 15509 / TH2)).